Here is an 88-residue protein sequence, read N- to C-terminus: DNA-directed RNA polymerase subunit omega (88 aa).

This sequence belongs to the RNA polymerase subunit omega family. In terms of assembly, the RNAP catalytic core consists of 2 alpha, 1 beta, 1 beta' and 1 omega subunit. When a sigma factor is associated with the core the holoenzyme is formed, which can initiate transcription.

The catalysed reaction is RNA(n) + a ribonucleoside 5'-triphosphate = RNA(n+1) + diphosphate. Promotes RNA polymerase assembly. Latches the N- and C-terminal regions of the beta' subunit thereby facilitating its interaction with the beta and alpha subunits. The polypeptide is DNA-directed RNA polymerase subunit omega (Salinispora tropica (strain ATCC BAA-916 / DSM 44818 / JCM 13857 / NBRC 105044 / CNB-440)).